Reading from the N-terminus, the 212-residue chain is MINNEKAVNNKRSTDGGKLFRSQVKFVAGAMNINQIPNFSLPEIAFVGKSNVGKSSLINTICNNKNLAKVSNTPGRTRQINFFNLADKLIIVDLPGYGFAHVPISVKEQWEVLISYYLRNSHNLRLVNLLIDSRRGIKENDQKVAELLLANKREFQIIFTKSDKVIDCKNLNNEVQNFLATLNYSCNVMYVSSRSKEGARALKASLAKCIKA.

One can recognise an EngB-type G domain in the interval 40-212 (SLPEIAFVGK…KASLAKCIKA (173 aa)). GTP contacts are provided by residues 48–55 (GKSNVGKS), 75–79 (GRTRQ), 93–96 (DLPG), 160–163 (TKSD), and 191–193 (VSS). 2 residues coordinate Mg(2+): Ser-55 and Thr-77.

This sequence belongs to the TRAFAC class TrmE-Era-EngA-EngB-Septin-like GTPase superfamily. EngB GTPase family. Mg(2+) is required as a cofactor.

In terms of biological role, necessary for normal cell division and for the maintenance of normal septation. This Rickettsia akari (strain Hartford) protein is Probable GTP-binding protein EngB.